Here is a 61-residue protein sequence, read N- to C-terminus: uncharacterized protein (61 aa).

This is an uncharacterized protein from Enterobacteria phage T4 (Bacteriophage T4).